Consider the following 360-residue polypeptide: Nicotinate-nucleotide--dimethylbenzimidazole phosphoribosyltransferase (360 aa).

Glutamate 327 acts as the Proton acceptor in catalysis.

Belongs to the CobT family.

The catalysed reaction is 5,6-dimethylbenzimidazole + nicotinate beta-D-ribonucleotide = alpha-ribazole 5'-phosphate + nicotinate + H(+). Its pathway is nucleoside biosynthesis; alpha-ribazole biosynthesis; alpha-ribazole from 5,6-dimethylbenzimidazole: step 1/2. Its function is as follows. Catalyzes the synthesis of alpha-ribazole-5'-phosphate from nicotinate mononucleotide (NAMN) and 5,6-dimethylbenzimidazole (DMB). This chain is Nicotinate-nucleotide--dimethylbenzimidazole phosphoribosyltransferase, found in Shewanella baltica (strain OS155 / ATCC BAA-1091).